The primary structure comprises 360 residues: Methylthioribose-1-phosphate isomerase (360 aa).

The active-site Proton donor is the Asp252.

This sequence belongs to the eIF-2B alpha/beta/delta subunits family. MtnA subfamily.

The protein localises to the cytoplasm. It is found in the nucleus. The catalysed reaction is 5-(methylsulfanyl)-alpha-D-ribose 1-phosphate = 5-(methylsulfanyl)-D-ribulose 1-phosphate. It participates in amino-acid biosynthesis; L-methionine biosynthesis via salvage pathway; L-methionine from S-methyl-5-thio-alpha-D-ribose 1-phosphate: step 1/6. Its function is as follows. Catalyzes the interconversion of methylthioribose-1-phosphate (MTR-1-P) into methylthioribulose-1-phosphate (MTRu-1-P). The protein is Methylthioribose-1-phosphate isomerase of Trichoplax adhaerens (Trichoplax reptans).